A 229-amino-acid polypeptide reads, in one-letter code: Enolase-phosphatase E1 (229 aa).

Positions 7 and 9 each coordinate Mg(2+). Substrate is bound by residues 122-123 and K161; that span reads SS. Residue D186 participates in Mg(2+) binding.

It belongs to the HAD-like hydrolase superfamily. MasA/MtnC family. In terms of assembly, monomer. It depends on Mg(2+) as a cofactor.

Its subcellular location is the cytoplasm. The protein localises to the nucleus. The enzyme catalyses 5-methylsulfanyl-2,3-dioxopentyl phosphate + H2O = 1,2-dihydroxy-5-(methylsulfanyl)pent-1-en-3-one + phosphate. Its pathway is amino-acid biosynthesis; L-methionine biosynthesis via salvage pathway; L-methionine from S-methyl-5-thio-alpha-D-ribose 1-phosphate: step 3/6. The protein operates within amino-acid biosynthesis; L-methionine biosynthesis via salvage pathway; L-methionine from S-methyl-5-thio-alpha-D-ribose 1-phosphate: step 4/6. Bifunctional enzyme that catalyzes the enolization of 2,3-diketo-5-methylthiopentyl-1-phosphate (DK-MTP-1-P) into the intermediate 2-hydroxy-3-keto-5-methylthiopentenyl-1-phosphate (HK-MTPenyl-1-P), which is then dephosphorylated to form the acireductone 1,2-dihydroxy-3-keto-5-methylthiopentene (DHK-MTPene). The protein is Enolase-phosphatase E1 of Clavispora lusitaniae (strain ATCC 42720) (Yeast).